The sequence spans 487 residues: MSDDKPFLCTAPGCGQRFTNEDHLAVHKHKHEMTLKFGPARNDSVIVADQTPTPTRFLKNCEEVGLFNELASPFENEFKKASEDDIKKMPLDLSPLATPIIRSKIEEPSVVETTHQDSPLPHPESTTSDEKEVPLAQTAQPTSAIVRPASLQVPNVLLTSSDSSVIIQQAVPSPTSSTVITQAPSSNRPIVPVPGPFPLLLHLPNGQTMPVAIPASITSSNVHVPAAVPLVRPVTMVPSVPGIPGPSSPQPVQSEAKMRLKAALTQQHPPVTNGDTVKGHGSGLVRTQSEESRPQSLQQPATSTTETPASPAHTTPQTQNTSGRRRRAANEDPDEKRRKFLERNRAAASRCRQKRKVWVQSLEKKAEDLSSLNGQLQSEVTLLRNEVAQLKQLLLAHKDCPVTAMQKKSGYHTADKDDSSEDLSVPSSPHTEAIQHSSVSTSNGVSSTSKAEAVATSVLTQMADQSTEPALSQIVMAPPSQAQPSGS.

The C2H2-type zinc finger occupies 7–31 (FLCTAPGCGQRFTNEDHLAVHKHKH). Phosphothreonine; by PKC/PRKCH is present on T34. The residue at position 44 (S44) is a Phosphoserine. T51 carries the post-translational modification Phosphothreonine; by MAPK11 and MAPK14. Residue T53 is modified to Phosphothreonine; by MAPK1, MAPK3, MAPK11, MAPK12, MAPK14 and PLK3. T55 bears the Phosphothreonine; by VRK1 mark. A phosphoserine mark is found at S72 and S94. T98 is subject to Phosphothreonine. S103 carries the phosphoserine; by PKC/PRKCA and PKC/PRKCB modification. Disordered stretches follow at residues 106 to 137 (EEPSVVETTHQDSPLPHPESTTSDEKEVPLAQ) and 241 to 355 (PGIP…RQKR). Phosphoserine is present on S118. Residues 264–275 (LTQQHPPVTNGD) show a composition bias toward polar residues. An essential for its histone acetyltransferase activity region spans residues 278–281 (KGHG). A compositionally biased stretch (low complexity) spans 300–316 (PATSTTETPASPAHTTP). S310 carries the post-translational modification Phosphoserine. S322 is modified (phosphoserine; by PKC/PRKCA and PKC/PRKCB). The span at 328 to 345 (AANEDPDEKRRKFLERNR) shows a compositional bias: basic and acidic residues. The bZIP domain occupies 334–397 (DEKRRKFLER…AQLKQLLLAH (64 aa)). Residues 336 to 356 (KRRKFLERNRAAASRCRQKRK) form a basic motif region. K339 is modified (N6-acetyllysine). At S349 the chain carries Phosphoserine; by PKC/PRKCA and PKC/PRKCB. K356 carries the post-translational modification N6-acetyllysine. The segment at 362 to 390 (LEKKAEDLSSLNGQLQSEVTLLRNEVAQL) is leucine-zipper. Positions 387-396 (VAQLKQLLLA) match the Nuclear export signal motif. A disordered region spans residues 407 to 453 (KKSGYHTADKDDSSEDLSVPSSPHTEAIQHSSVSTSNGVSSTSKAEA). A phosphoserine mark is found at S424 and S428. The span at 425–436 (VPSSPHTEAIQH) shows a compositional bias: polar residues. The span at 437 to 449 (SSVSTSNGVSSTS) shows a compositional bias: low complexity. A phosphoserine; by ATM mark is found at S472 and S480.

Belongs to the bZIP family. ATF subfamily. As to quaternary structure, binds DNA as a dimer and can form a homodimer in the absence of DNA. Can form a heterodimer with JUN. Heterodimerization is essential for its transcriptional activity. Interacts with SMAD3 and SMAD4. Interacts with the HK1/VDAC1 complex. Interacts with NBN, MRE11, XPO1, KAT5 and CUL3. Binds through its N-terminal region to UTF1 which acts as a coactivator of ATF2 transcriptional activity. Post-translationally, phosphorylation of Thr-51 by MAPK14 and MAPK11, and at Thr-53 by MAPK1/ERK2, MAPK3/ERK1, MAPK11, MAPK12 and MAPK14 in response to external stimulus like insulin causes increased transcriptional activity. Phosphorylated by PLK3 following hyperosmotic stress. Also phosphorylated and activated by JNK and CaMK4. ATM-mediated phosphorylation at Ser-472 and Ser-480 stimulates its function in DNA damage response. Phosphorylation at Ser-44, Thr-55 and Ser-103 activates its transcriptional activity. Phosphorylation at Thr-51 or Thr-53 enhances acetylation of histones H2B and H4.

It is found in the nucleus. The protein localises to the cytoplasm. It localises to the mitochondrion outer membrane. Functionally, transcriptional activator which regulates the transcription of various genes, including those involved in anti-apoptosis, cell growth, and DNA damage response. Dependent on its binding partner, binds to CRE (cAMP response element) consensus sequences (5'-TGACGTCA-3') or to AP-1 (activator protein 1) consensus sequences (5'-TGACTCA-3'). In the nucleus, contributes to global transcription and the DNA damage response, in addition to specific transcriptional activities that are related to cell development, proliferation and death. In the cytoplasm, interacts with and perturbs HK1- and VDAC1-containing complexes at the mitochondrial outer membrane, thereby impairing mitochondrial membrane potential, inducing mitochondrial leakage and promoting cell death. The phosphorylated form (mediated by ATM) plays a role in the DNA damage response and is involved in the ionizing radiation (IR)-induced S phase checkpoint control and in the recruitment of the MRN complex into the IR-induced foci (IRIF). Exhibits histone acetyltransferase (HAT) activity which specifically acetylates histones H2B and H4 in vitro. In concert with CUL3 and RBX1, promotes the degradation of KAT5 thereby attenuating its ability to acetylate and activate ATM. Can elicit oncogenic or tumor suppressor activities depending on the tissue or cell type. This chain is Cyclic AMP-dependent transcription factor ATF-2 (Atf2), found in Mus musculus (Mouse).